Consider the following 167-residue polypeptide: DNA-directed RNA polymerase 19 kDa subunit (167 aa).

A disordered region spans residues 15–41 (DNDYKSYDEDDDSISDIGETSDDCCTT). The segment covering 22 to 36 (DEDDDSISDIGETSD) has biased composition (acidic residues).

Belongs to the poxviridae DNA-directed RNA polymerase 19 kDa subunit family. In terms of assembly, the DNA-dependent RNA polymerase used for intermediate and late genes expression consists of eight subunits (147) kDa, 133 kDa, 35 kDa, 30 kDa, 22 kDa, 19 kDa, 18 kDa and 7 kDa totalling more than 500 kDa in mass. The same holoenzyme, with the addition of the transcription-specificity factor RAP94, is used for early gene expression.

The protein resides in the virion. The catalysed reaction is RNA(n) + a ribonucleoside 5'-triphosphate = RNA(n+1) + diphosphate. Part of the DNA-dependent RNA polymerase which catalyzes the transcription of viral DNA into RNA using the four ribonucleoside triphosphates as substrates. Responsible for the transcription of early, intermediate and late genes. DNA-dependent RNA polymerase associates with the early transcription factor (ETF) thereby allowing the early genes transcription. Late transcription, and probably also intermediate transcription, require newly synthesized RNA polymerase. The polypeptide is DNA-directed RNA polymerase 19 kDa subunit (RPO19) (Vertebrata (FPV)).